Here is a 368-residue protein sequence, read N- to C-terminus: 4-hydroxy-3-methylbut-2-en-1-yl diphosphate synthase (flavodoxin) (368 aa).

Residues Cys271, Cys274, Cys306, and Glu313 each coordinate [4Fe-4S] cluster.

This sequence belongs to the IspG family. It depends on [4Fe-4S] cluster as a cofactor.

The catalysed reaction is (2E)-4-hydroxy-3-methylbut-2-enyl diphosphate + oxidized [flavodoxin] + H2O + 2 H(+) = 2-C-methyl-D-erythritol 2,4-cyclic diphosphate + reduced [flavodoxin]. It functions in the pathway isoprenoid biosynthesis; isopentenyl diphosphate biosynthesis via DXP pathway; isopentenyl diphosphate from 1-deoxy-D-xylulose 5-phosphate: step 5/6. Converts 2C-methyl-D-erythritol 2,4-cyclodiphosphate (ME-2,4cPP) into 1-hydroxy-2-methyl-2-(E)-butenyl 4-diphosphate. The sequence is that of 4-hydroxy-3-methylbut-2-en-1-yl diphosphate synthase (flavodoxin) from Haemophilus influenzae (strain ATCC 51907 / DSM 11121 / KW20 / Rd).